Here is a 186-residue protein sequence, read N- to C-terminus: Nuclear transcription factor Y subunit C-5 (186 aa).

The tract at residues 166-186 is disordered; it reads QMPGAWTEEDATGANGGNGGN.

Belongs to the NFYC/HAP5 subunit family. In terms of assembly, heterotrimeric transcription factor composed of three components, NF-YA, NF-YB and NF-YC. NF-YB and NF-YC must interact and dimerize for NF-YA association and DNA binding. In terms of tissue distribution, expressed in inflorescences and flowers.

It is found in the nucleus. Its function is as follows. Stimulates the transcription of various genes by recognizing and binding to a CCAAT motif in promoters. The protein is Nuclear transcription factor Y subunit C-5 (NFYC5) of Arabidopsis thaliana (Mouse-ear cress).